The primary structure comprises 501 residues: Probable malate:quinone oxidoreductase (501 aa).

This sequence belongs to the MQO family. The cofactor is FAD.

It carries out the reaction (S)-malate + a quinone = a quinol + oxaloacetate. It functions in the pathway carbohydrate metabolism; tricarboxylic acid cycle; oxaloacetate from (S)-malate (quinone route): step 1/1. This Geobacillus kaustophilus (strain HTA426) protein is Probable malate:quinone oxidoreductase.